The chain runs to 177 residues: Isopentenyl-diphosphate Delta-isomerase (177 aa).

Positions 22 and 28 each coordinate Mn(2+). One can recognise a Nudix hydrolase domain in the interval 26–160 (LRHKAISVFV…PERFTPWLRI (135 aa)). Cys62 is a catalytic residue. His64 lines the Mn(2+) pocket. Glu82 contacts Mg(2+). Mn(2+) is bound by residues Glu108 and Glu110. Glu110 is a catalytic residue.

Belongs to the IPP isomerase type 1 family. The cofactor is Mg(2+). It depends on Mn(2+) as a cofactor.

It localises to the cytoplasm. The catalysed reaction is isopentenyl diphosphate = dimethylallyl diphosphate. Its pathway is isoprenoid biosynthesis; dimethylallyl diphosphate biosynthesis; dimethylallyl diphosphate from isopentenyl diphosphate: step 1/1. It participates in porphyrin-containing compound metabolism; chlorophyll biosynthesis. Catalyzes the 1,3-allylic rearrangement of the homoallylic substrate isopentenyl (IPP) to its highly electrophilic allylic isomer, dimethylallyl diphosphate (DMAPP). The protein is Isopentenyl-diphosphate Delta-isomerase of Cereibacter sphaeroides (strain ATCC 17025 / ATH 2.4.3) (Rhodobacter sphaeroides).